The chain runs to 652 residues: Phosphomethylpyrimidine synthase (652 aa).

Substrate-binding positions include asparagine 235, methionine 264, tyrosine 293, histidine 329, 349–351 (SRG), 390–393 (DGMR), and glutamate 429. Histidine 433 serves as a coordination point for Zn(2+). Tyrosine 456 is a binding site for substrate. Histidine 497 is a binding site for Zn(2+). [4Fe-4S] cluster-binding residues include cysteine 577, cysteine 580, and cysteine 585.

It belongs to the ThiC family. In terms of assembly, homodimer. [4Fe-4S] cluster is required as a cofactor.

It carries out the reaction 5-amino-1-(5-phospho-beta-D-ribosyl)imidazole + S-adenosyl-L-methionine = 4-amino-2-methyl-5-(phosphooxymethyl)pyrimidine + CO + 5'-deoxyadenosine + formate + L-methionine + 3 H(+). Its pathway is cofactor biosynthesis; thiamine diphosphate biosynthesis. Functionally, catalyzes the synthesis of the hydroxymethylpyrimidine phosphate (HMP-P) moiety of thiamine from aminoimidazole ribotide (AIR) in a radical S-adenosyl-L-methionine (SAM)-dependent reaction. This is Phosphomethylpyrimidine synthase from Shewanella sediminis (strain HAW-EB3).